Reading from the N-terminus, the 493-residue chain is Transcript termination protein OPG145 (493 aa).

A Helicase ATP-binding domain is found at 100 to 256 (MIKLKRPLYI…NSIINIAKLS (157 aa)). Residue 113-120 (LACGFGKT) coordinates ATP. The DESH box signature appears at 206–209 (DESH).

This sequence belongs to the helicase family. Poxviruses subfamily. In terms of assembly, interacts with OPG087. Might be part of a transcription complex composed at least of OPG087, OPG110, and OPG145.

The protein resides in the virion. In terms of biological role, DNA helicase which seems to act as a postreplicative transcription termination factor. Involved in ATP-dependent release of nascent RNA. Forms a stable complex with single-stranded DNA, and to a lesser extent RNA. This chain is Transcript termination protein OPG145 (OPG145), found in Variola virus (isolate Human/India/Ind3/1967) (VARV).